Reading from the N-terminus, the 789-residue chain is MLSSANRFYIKRHLATHANMFPSVSKNFQTKVPPYAKLLTNLDKIKQITNNAPLTLAEKILYSHLCDPEESITSSDLSTIRGNKYLKLNPDRVAMQDASAQMALLQFMTTGLNQTSVPASIHCDHLIVGKDGETKDLPSSIATNQEVFDFLESCAKRYGIQFWGPGSGIIHQIVLENFSAPGLMMLGTDSHTPNAGGLGAIAIGVGGADAVDALTGTPWELKAPKILGVKLTGKLNGWSTPKDVITKLAGLLTVRGGTGYIVEYFGEGVSTLSCTGMATICNMGAEIGATTSTFPYQEAHKRYLQATNRAEVAEAADVALNKFNFLRADKDAQYDKVIEIDLSAIEPHVNGPFTPDLSTPISQYAEKSLKENWPQKVSAGLIGSCTNSSYQDMSRVVDLVKQASKAGLKPRIPFFVTPGSEQIRATLERDGIIDIFQENGAKVLANACGPCIGQWNREDVSKTSKETNTIFTSFNRNFRARNDGNRNTMNFLTSPEIVTAMSYSGDAQFNPLTDSIKLPNGKDFKFQPPKGDELPKRGFEHGRDKFYPEMDPKPDSNVEIKVDPNSDRLQLLEPFKPWNGKELKTNVLLKVEGKCTTDHISAAGVWLKYKGHLENISYNTLIGAQNKETGEVNKAYDLDGTEYDIPGLMMKWKSDGRPWTVIAEHNYGEGSAREHAALSPRFLGGEILLVKSFARIHETNLKKQGVLPLTFANESDYDKISSGDVLETLNLVDMIAKDGNNGGEIDVKITKPNGESFTIKAKHTMSKDQIDFFKAGSAINYIGNIRRNE.

The N-terminal 14 residues, 1–14 (MLSSANRFYIKRHL), are a transit peptide targeting the mitochondrion. Substrate-binding positions include glutamine 96 and 189 to 191 (DSH). Residues cysteine 385, cysteine 448, and cysteine 451 each coordinate [4Fe-4S] cluster. Substrate-binding positions include arginine 476, arginine 481, lysine 610, and 672 to 673 (AR).

This sequence belongs to the aconitase/IPM isomerase family. Requires [4Fe-4S] cluster as cofactor.

Its subcellular location is the mitochondrion. The catalysed reaction is (2R)-homocitrate = cis-homoaconitate + H2O. Its pathway is amino-acid biosynthesis; L-lysine biosynthesis via AAA pathway; L-alpha-aminoadipate from 2-oxoglutarate: step 2/5. Catalyzes the reversible dehydration of (R)-homocitrate to cis-homoaconitate, a step in the alpha-aminoadipate pathway for lysine biosynthesis. The protein is Homocitrate dehydratase, mitochondrial (ACO2) of Saccharomyces cerevisiae (strain ATCC 204508 / S288c) (Baker's yeast).